Here is a 1282-residue protein sequence, read N- to C-terminus: MALVGPRIWGPRRDIYPLLLLLLLLLLLLLPWVPAGLVPPETPSVCASDPCAPGTKCQATESGGYTCEPSELGGCATQPCHHGALCVPQGPDPNSFRCYCVPGFQGPHCELDIDECASRPCQHGGTCQNLADHYECHCPLGYAGVTCEAEVDECSSAPCLHGGSCLDGVGSYRCVCAPGYAGANCQLDVDECQSQPCAHGGVCHDLVNGFRCDCADTGYEGARCEQEVLECASAPCAHNASCLDGFRSFRCLCWPGFSGERCEVDEDECASGPCQNGGQCLQRSDPTLYGGVQAIFPGAFSFSHAAGFLCSCPLGFAGNDCSMDVDECASGPCLNGGSCQDLPNGFQCYCQDGYTGLTCQEDMDECQSEPCLHGGTCSDTVAGYICQCPEAWGGHDCSVQLTGCQGHTCPLAATCIPTFKSGLHGYFCRCPPGTYGPFCGQNTTFSVVSGSSVWGLVPAAASLGLALRFRTTLLAGTLATLKDTRDSLELVLVGAVLQATLSRHGTAVLILTLPDLALNDGHWHQVEVTLHLGTLELRLWHEGCPGQLCVASGPVATGPTASVASGPPGSYSIYLGGGVFAGCFQDVRVEGHLLLPEELKGTVLLGCERREPCQPLPCAHGGACVDLWTHFRCDCPRPYRGATCTDEVPAATFGLGGATSSASFLLHQLGPNLTVSFFLRTREPAGLLLQFANDSVASLTVFLSEGQIRAEGLGHPAVVLPGRWDDGLPHLVMLSFGPDQLQDLGQRLYVGGRFYPDDTQLWGGPFRGCLQDLQLNSIHLPFFSSPMENSSWPSELEAGQSSNLTQGCVSEDTCNPNPCFNGGTCHVTWNDFYCTCSENFTGPTCAQQRWCPRQPCLPPATCEEVPDGFVCVAEATFREGPPAVFTGHNVSSSLSGLTLAFRTRDSEAGLLRAVSAAGAHSNIWLAVRNGSLAGDVAGSVLPAPGPRVADGAWHRVRLAREFPQAAASRWLLWLDGAATPVALHGLGGDLGFLQGPGAVPLLLAENFTGCLGRVALGDFPLPLAPPRSGTVSGAREHFVAWPGSPAVSLGCRGGPVCSPSPCLHGGACRDLFDAFACSCGPAWEGPRCEIRADPCRSTPCVRGQCHARPDGRFECRCPPGFSGPRCRLPVLPQGCNLNSTCKDGAPCEGGPLGTNCSCQEGLAGLRCQSLDKPCEASPCLNGGTCRVASGIFECTCSAGFSGQFCEVVKTLPLPLPFPLLEVAVPAACACLLLLLLGLLSGILAARKRRQSEGTYSPSQQEVAGARLEMDSVLKVPPEERLI.

An N-terminal signal peptide occupies residues 1–35 (MALVGPRIWGPRRDIYPLLLLLLLLLLLLLPWVPA). Residues 36–1221 (GLVPPETPSV…PLPLPFPLLE (1186 aa)) are Extracellular-facing. One can recognise an EGF-like 1 domain in the interval 71–110 (ELGGCATQPCHHGALCVPQGPDPNSFRCYCVPGFQGPHCE). 27 cysteine pairs are disulfide-bonded: C75-C86, C80-C98, C100-C109, C116-C127, C121-C136, C138-C147, C154-C165, C159-C174, C176-C185, C192-C203, C197-C212, C214-C224, C231-C242, C236-C251, C253-C262, C269-C280, C274-C310, C312-C321, C328-C339, C333-C348, C350-C359, C366-C377, C371-C386, C388-C397, C404-C415, C409-C428, and C430-C439. Residues 112–148 (DIDECASRPCQHGGTCQNLADHYECHCPLGYAGVTCE) enclose the EGF-like 2; calcium-binding domain. The 37-residue stretch at 150-186 (EVDECSSAPCLHGGSCLDGVGSYRCVCAPGYAGANCQ) folds into the EGF-like 3; calcium-binding domain. An EGF-like 4; calcium-binding domain is found at 188–225 (DVDECQSQPCAHGGVCHDLVNGFRCDCADTGYEGARCE). EGF-like domains follow at residues 227 to 263 (EVLE…ERCE) and 265 to 322 (DEDE…NDCS). N239 carries N-linked (GlcNAc...) asparagine glycosylation. Residue S271 is glycosylated (O-linked (Glc...) serine). Residues 324 to 360 (DVDECASGPCLNGGSCQDLPNGFQCYCQDGYTGLTCQ) enclose the EGF-like 7; calcium-binding domain. The 37-residue stretch at 362–398 (DMDECQSEPCLHGGTCSDTVAGYICQCPEAWGGHDCS) folds into the EGF-like 8; calcium-binding domain. The 41-residue stretch at 400–440 (QLTGCQGHTCPLAATCIPTFKSGLHGYFCRCPPGTYGPFCG) folds into the EGF-like 9 domain. N-linked (GlcNAc...) asparagine glycosylation is present at N442. A Laminin G-like 1 domain is found at 444–607 (TFSVVSGSSV…ELKGTVLLGC (164 aa)). 4 cysteine pairs are disulfide-bonded: C583–C607, C613–C624, C618–C633, and C635–C644. Residues 609–645 (RREPCQPLPCAHGGACVDLWTHFRCDCPRPYRGATCT) form the EGF-like 10 domain. The 160-residue stretch at 649 to 808 (PAATFGLGGA…GQSSNLTQGC (160 aa)) folds into the Laminin G-like 2 domain. N-linked (GlcNAc...) asparagine glycosylation is found at N672, N693, N789, and N803. Disulfide bonds link C769/C808, C814/C825, C819/C834, and C836/C845. An EGF-like 11 domain is found at 810 to 846 (SEDTCNPNPCFNGGTCHVTWNDFYCTCSENFTGPTCA). N-linked (GlcNAc...) asparagine glycans are attached at residues N839, N889, N929, and N1006. Residues 872–1051 (VAEATFREGP…PGSPAVSLGC (180 aa)) form the Laminin G-like 3 domain. 13 disulfides stabilise this stretch: C1010/C1051, C1057/C1068, C1062/C1077, C1079/C1088, C1095/C1105, C1100/C1115, C1117/C1126, C1135/C1147, C1141/C1156, C1158/C1167, C1174/C1185, C1179/C1194, and C1196/C1205. 4 consecutive EGF-like domains span residues 1053–1089 (GGPV…PRCE), 1091–1127 (RADP…PRCR), 1131–1168 (LPQG…LRCQ), and 1170–1206 (LDKP…QFCE). N-linked (GlcNAc...) asparagine glycosylation is found at N1138 and N1155. A helical membrane pass occupies residues 1222 to 1242 (VAVPAACACLLLLLLGLLSGI). Residues 1243–1282 (LAARKRRQSEGTYSPSQQEVAGARLEMDSVLKVPPEERLI) are Cytoplasmic-facing. The tract at residues 1246 to 1282 (RKRRQSEGTYSPSQQEVAGARLEMDSVLKVPPEERLI) is interaction with EPB41L5.

Belongs to the Crumbs protein family. Interacts (via intracellular domain) with EPB41L5. In terms of processing, O-glucosylated by POGLUT1 at Ser-271; consists of an O-glucose trisaccharide, in which the O-glucose is elongated by the addition of two xylose residues. O-glucosylation is required for localization at the plasma membrane. In terms of tissue distribution, in the adult eye, strongly expressed in the outer nuclear layer, containing the cell bodies of the photoreceptor cells, and in the inner nuclear layer, containing the cell bodies of the horizontal, bipolar, amacrine, and Mueller glial cells. Also expressed in some cells in the ganglion cell layer (or may be displaced amacrine cells rather than ganglion cells).

The protein resides in the apical cell membrane. Functionally, apical polarity protein that plays a central role during the epithelial-to-mesenchymal transition (EMT) at gastrulation, when newly specified mesodermal cells move inside the embryo. Acts by promoting cell ingression, the process by which cells leave the epithelial epiblast and move inside the embryo to form a new tissue layer. The anisotropic distribution of CRB2 and MYH10/myosin-IIB at cell edges define which cells will ingress: cells with high apical CRB2 are probably extruded from the epiblast by neighboring cells with high levels of apical MYH10/myosin-IIB. Also required for maintenance of the apical polarity complex during development of the cortex. The sequence is that of Protein crumbs homolog 2 from Mus musculus (Mouse).